The sequence spans 138 residues: uncharacterized protein (138 aa).

The next 3 helical transmembrane spans lie at 8-28 (LIIQ…AFLP), 47-67 (FIIC…TIIV), and 82-102 (TLPV…IAFI).

To U.parvum UU007, UU008 and UU041.

It is found in the cell membrane. This is an uncharacterized protein from Ureaplasma parvum serovar 3 (strain ATCC 700970).